Here is a 179-residue protein sequence, read N- to C-terminus: Peptidyl-tRNA hydrolase (179 aa).

Tyr14 provides a ligand contact to tRNA. Catalysis depends on His19, which acts as the Proton acceptor. The tRNA site is built by Tyr61, Asn63, and Asn107.

It belongs to the PTH family. As to quaternary structure, monomer.

The protein resides in the cytoplasm. The enzyme catalyses an N-acyl-L-alpha-aminoacyl-tRNA + H2O = an N-acyl-L-amino acid + a tRNA + H(+). Its function is as follows. Hydrolyzes ribosome-free peptidyl-tRNAs (with 1 or more amino acids incorporated), which drop off the ribosome during protein synthesis, or as a result of ribosome stalling. Catalyzes the release of premature peptidyl moieties from peptidyl-tRNA molecules trapped in stalled 50S ribosomal subunits, and thus maintains levels of free tRNAs and 50S ribosomes. The chain is Peptidyl-tRNA hydrolase from Campylobacter lari (strain RM2100 / D67 / ATCC BAA-1060).